Here is a 421-residue protein sequence, read N- to C-terminus: Succinate--CoA ligase [ADP-forming] subunit beta, mitochondrial (421 aa).

The N-terminal 26 residues, methionine 1–arginine 26, are a transit peptide targeting the mitochondrion. The ATP-grasp domain occupies alanine 35–alanine 278. Residues lysine 74, glycine 81 to glycine 83, and glutamate 141 contribute to the ATP site. Asparagine 233 and aspartate 247 together coordinate Mg(2+). Residues asparagine 298 and glycine 355–methionine 357 contribute to the substrate site.

The protein belongs to the succinate/malate CoA ligase beta subunit family. As to quaternary structure, heterodimer of an alpha and a beta subunit. Requires Mg(2+) as cofactor.

The protein resides in the mitochondrion. The catalysed reaction is succinate + ATP + CoA = succinyl-CoA + ADP + phosphate. The protein operates within carbohydrate metabolism; tricarboxylic acid cycle; succinate from succinyl-CoA (ligase route): step 1/1. Succinyl-CoA synthetase functions in the citric acid cycle (TCA), coupling the hydrolysis of succinyl-CoA to the synthesis of ATP and thus represents the only step of substrate-level phosphorylation in the TCA. The beta subunit provides nucleotide specificity of the enzyme and binds the substrate succinate, while the binding sites for coenzyme A and phosphate are found in the alpha subunit. This is Succinate--CoA ligase [ADP-forming] subunit beta, mitochondrial from Arabidopsis thaliana (Mouse-ear cress).